Reading from the N-terminus, the 105-residue chain is Small cysteine and glycine repeat-containing protein 10 (105 aa).

Residues 4–41 (CGCGGCGGRCSGGCGGGCGGGCGGGCGGGCGGCGGGCG) form a 10 X 2 AA repeats of CG region.

It belongs to the KRTAP type 28 family.

In terms of biological role, in the hair cortex, hair keratin intermediate filaments are embedded in an interfilamentous matrix, consisting of hair keratin-associated proteins (KRTAP), which are essential for the formation of a rigid and resistant hair shaft through their extensive disulfide bond cross-linking with abundant cysteine residues of hair keratins. The matrix proteins include the high-sulfur and high-glycine-tyrosine keratins. The polypeptide is Small cysteine and glycine repeat-containing protein 10 (Homo sapiens (Human)).